A 398-amino-acid polypeptide reads, in one-letter code: MVLTTRHHLDGFRSIQVMLGALEHPLDVMKASKGRSCSENDHRMYRFSKNLPRGVCSPLTTGPHPTTHLEPTMHQPHRSLLRKAFQMIPPLDGSLHKGQAGRIGIVGGSKDYTGAPFYSGYASLRLGSDLSHVICEPSASTVIKTYSPDLMVHSYLSSPKEPEAYASHQNLFEQLLDRLHVLVVGPGLGRDTEMQDWAEWTLKTAIKKKLHLVLDADALWLLVKKPDLLRGYPNAILTPNHVEFQRLLKACSIEPRENDDDGLLAMELSKALGGCSILQKGSIDLVAREGSEVAKVSCEGSPKRCGGQGDILSGLVGTWCAWTKLYFERQSQDEKPKSHELPISSEEAWIIAAVLGSEITRTCSRLAYHKLGRSMQSSDMLGYIGEAFELVMHGHTKD.

The region spanning 80 to 391 (LLRKAFQMIP…GYIGEAFELV (312 aa)) is the YjeF C-terminal domain. Residues glycine 187 and 240 to 246 (NHVEFQR) contribute to the (6S)-NADPHX site. ATP-binding positions include 280–284 (KGSID) and 300–309 (GSPKRCGGQG). Aspartate 310 contacts (6S)-NADPHX.

This sequence belongs to the NnrD/CARKD family. It depends on Mg(2+) as a cofactor.

The protein localises to the cytoplasm. It catalyses the reaction (6S)-NADHX + ATP = ADP + phosphate + NADH + H(+). The catalysed reaction is (6S)-NADPHX + ATP = ADP + phosphate + NADPH + H(+). Functionally, catalyzes the dehydration of the S-form of NAD(P)HX at the expense of ATP, which is converted to ADP. Together with NAD(P)HX epimerase, which catalyzes the epimerization of the S- and R-forms, the enzyme allows the repair of both epimers of NAD(P)HX, a damaged form of NAD(P)H that is a result of enzymatic or heat-dependent hydration. This is ATP-dependent (S)-NAD(P)H-hydrate dehydratase 1 from Puccinia graminis f. sp. tritici (strain CRL 75-36-700-3 / race SCCL) (Black stem rust fungus).